We begin with the raw amino-acid sequence, 353 residues long: Keratocan (353 aa).

Positions 1 to 21 (MMTLKVCPSLLLLFLVHSVWT) are cleaved as a signal peptide. An LRRNT domain is found at 34–72 (EHWSHYTFECPQECFCPPSFPNALYCDNKGLKEIPAIPA). 2 disulfides stabilise this stretch: Cys-43–Cys-49 and Cys-47–Cys-59. LRR repeat units follow at residues 73–94 (RIWYLYLQNNLIETISEKPFVN), 97–118 (HLRWINLNKNKITNNGIESGVL), 123–143 (RLLYLFLEDNELEEVPAPLPV), 144–165 (GLEQLRLARNKISRIPEGVFSN), 168–188 (NLTMLDLHQNNLLDSALQSDT), 194–214 (SLMQLNIAKNSLKKMPLSIPA), 215–236 (NTLQLFLDNNSIEVIPENYFSA), 239–262 (KVTFLRLNYNKLSDDGIPPNGFNV), 264–283 (SILDLQLSHNQLTKIPPINA), and 284–305 (HLEHLHLDHNRIKSVNGTQICP). Asn-94 carries N-linked (GlcNAc...) (keratan sulfate) asparagine glycosylation. N-linked (GlcNAc...) asparagine glycosylation is present at Asn-168. 2 N-linked (GlcNAc...) (keratan sulfate) asparagine glycosylation sites follow: Asn-223 and Asn-261. N-linked (GlcNAc...) asparagine glycosylation is present at Asn-299. A disulfide bridge links Cys-304 with Cys-344.

Belongs to the small leucine-rich proteoglycan (SLRP) family. SLRP class II subfamily. In terms of processing, binds keratan sulfate chains.

Its subcellular location is the secreted. The protein resides in the extracellular space. It is found in the extracellular matrix. Functionally, plays an important role in generating and maintaining a transparent matrix within the corneal stroma. This is Keratocan (KERA) from Gallus gallus (Chicken).